The following is a 74-amino-acid chain: Translation initiation factor IF-1 (74 aa).

Residues 1–72 enclose the S1-like domain; sequence MAKETEMEFE…TRGRITYRKI (72 aa).

This sequence belongs to the IF-1 family. In terms of assembly, component of the 30S ribosomal translation pre-initiation complex which assembles on the 30S ribosome in the order IF-2 and IF-3, IF-1 and N-formylmethionyl-tRNA(fMet); mRNA recruitment can occur at any time during PIC assembly.

Its subcellular location is the cytoplasm. In terms of biological role, one of the essential components for the initiation of protein synthesis. Stabilizes the binding of IF-2 and IF-3 on the 30S subunit to which N-formylmethionyl-tRNA(fMet) subsequently binds. Helps modulate mRNA selection, yielding the 30S pre-initiation complex (PIC). Upon addition of the 50S ribosomal subunit IF-1, IF-2 and IF-3 are released leaving the mature 70S translation initiation complex. This is Translation initiation factor IF-1 from Mycoplasma capricolum subsp. capricolum (strain California kid / ATCC 27343 / NCTC 10154).